A 265-amino-acid chain; its full sequence is Beta-lactamase SHV-4 (265 aa).

Ser-45 serves as the catalytic Acyl-ester intermediate. Residues Cys-52 and Cys-98 are joined by a disulfide bond. Glu-143 serves as the catalytic Proton acceptor. 209-211 contacts substrate; that stretch reads KTG.

It belongs to the class-A beta-lactamase family.

It carries out the reaction a beta-lactam + H2O = a substituted beta-amino acid. SHV enzymes hydrolyze broad spectrum cephalosporins notably cefotaxime and ceftazidime. SHV-4 causes particularly high levels of resistance to aztreonam and ceftazidime. This Klebsiella pneumoniae protein is Beta-lactamase SHV-4 (bla).